The following is a 504-amino-acid chain: Anaerobic nitric oxide reductase transcription regulator NorR (504 aa).

A 4-aspartylphosphate modification is found at Asp-57. The Sigma-54 factor interaction domain maps to 187–416; sequence MIGLSPGMTQ…LEHAIHRAVV (230 aa). ATP contacts are provided by residues 215 to 222 and 278 to 287; these read GETGTGKE and ADNGTLFLDE. Residues 479 to 498 constitute a DNA-binding region (H-T-H motif); it reads WAACARMLETDVANLHRLAK.

The protein operates within nitrogen metabolism; nitric oxide reduction. Its function is as follows. Required for the expression of anaerobic nitric oxide (NO) reductase, acts as a transcriptional activator for at least the norVW operon. Activation also requires sigma-54. The sequence is that of Anaerobic nitric oxide reductase transcription regulator NorR from Escherichia coli (strain K12 / MC4100 / BW2952).